Reading from the N-terminus, the 228-residue chain is Sodium channel regulatory subunit beta-4 (228 aa).

Residues 1-30 (MPGAGDGGKAPARWLGTGLLGLFLLPVTLS) form the signal peptide. In terms of domain architecture, Ig-like C2-type spans 31–148 (LEVSVGKATD…NNLQHHATIF (118 aa)). Residues 31–162 (LEVSVGKATD…DRLEEVDNTV (132 aa)) are Extracellular-facing. N45, N71, and N113 each carry an N-linked (GlcNAc...) asparagine glycan. C53 and C131 are joined by a disulfide. Residues 163-183 (TLIILAVVGGVIGLLILILLI) form a helical membrane-spanning segment. Residues 184–228 (KKLIIFILKKTREKKKECLVSSSGNDNTENGLPGSKAEEKPPSKV) lie on the Cytoplasmic side of the membrane. The disordered stretch occupies residues 200–228 (ECLVSSSGNDNTENGLPGSKAEEKPPSKV). Residues 203-213 (VSSSGNDNTEN) show a composition bias toward polar residues. Over residues 219–228 (KAEEKPPSKV) the composition is skewed to basic and acidic residues.

The protein belongs to the sodium channel auxiliary subunit SCN4B (TC 8.A.17) family. A voltage-gated sodium (Nav) channel consists of an ion-conducting pore-forming alpha subunit functional on its own that is regulated by one or more beta subunits. The beta subunit SCN4B is disulfide-linked to the pore-forming alpha subunit. Interacts with SCN1A; regulatory subunit of SCN1A/Nav1.1. Interacts with SCN2A; regulatory subunit of SCN2A/Nav1.2. Post-translationally, contains an interchain disulfide bond with SCN2A. In terms of processing, N-glycosylated. As to expression, expressed at a high level in dorsal root ganglia, at a lower level in brain, spinal cord, skeletal muscle and heart. Expressed in the atrium.

Its subcellular location is the cell membrane. Functionally, regulatory subunit of multiple voltage-gated sodium (Nav) channels directly mediating the depolarization of excitable membranes. Navs, also called VGSCs (voltage-gated sodium channels) or VDSCs (voltage-dependent sodium channels), operate by switching between closed and open conformations depending on the voltage difference across the membrane. In the open conformation they allow Na(+) ions to selectively pass through the pore, along their electrochemical gradient. The influx of Na+ ions provokes membrane depolarization, initiating the propagation of electrical signals throughout cells and tissues. The accessory beta subunits participate in localization and functional modulation of the Nav channels. Modulates the activity of SCN1A/Nav1.1. Modulates the activity of SCN2A/Nav1.2. This chain is Sodium channel regulatory subunit beta-4, found in Homo sapiens (Human).